We begin with the raw amino-acid sequence, 273 residues long: L-fucose dehydrogenase (273 aa).

Positions 19, 21, 40, 41, 62, 63, 89, 154, 158, 187, 189, and 191 each coordinate NAD(+). The active-site Proton acceptor is tyrosine 154.

Belongs to the short-chain dehydrogenases/reductases (SDR) family. In terms of assembly, homotetramer.

Its subcellular location is the cytoplasm. The catalysed reaction is L-fucose + NAD(+) = L-fucono-1,5-lactone + NADH + H(+). It carries out the reaction D-arabinose + NAD(+) = D-arabinono-1,5-lactone + NADH + H(+). The enzyme catalyses L-galactose + NAD(+) = L-galactono-1,5-lactone + NADH + H(+). It functions in the pathway carbohydrate degradation; L-fucose degradation. Its function is as follows. Catalyzes the NAD(+)-dependent oxidation of L-fucose, yielding L-fucono-1,5-lactone, which rapidly converts spontaneously to L-fucone-1,4-lactone. Can also act on D-arabinose and L-galactose, with lower catalytic efficiency. Does not use NADPH. May be the initial enzyme of the putative L-fucose degradation pathway in mammals. The sequence is that of L-fucose dehydrogenase from Mus musculus (Mouse).